Consider the following 264-residue polypeptide: Thymidylate synthase (264 aa).

Arginine 21 lines the dUMP pocket. A (6R)-5,10-methylene-5,6,7,8-tetrahydrofolate-binding site is contributed by histidine 51. 126–127 (RR) contacts dUMP. The active-site Nucleophile is the cysteine 146. DUMP-binding positions include 166–169 (RSCD), asparagine 177, and 207–209 (HLY). Aspartate 169 is a binding site for (6R)-5,10-methylene-5,6,7,8-tetrahydrofolate. Position 263 (alanine 263) interacts with (6R)-5,10-methylene-5,6,7,8-tetrahydrofolate.

This sequence belongs to the thymidylate synthase family. Bacterial-type ThyA subfamily. As to quaternary structure, homodimer.

The protein resides in the cytoplasm. It carries out the reaction dUMP + (6R)-5,10-methylene-5,6,7,8-tetrahydrofolate = 7,8-dihydrofolate + dTMP. The protein operates within pyrimidine metabolism; dTTP biosynthesis. Its function is as follows. Catalyzes the reductive methylation of 2'-deoxyuridine-5'-monophosphate (dUMP) to 2'-deoxythymidine-5'-monophosphate (dTMP) while utilizing 5,10-methylenetetrahydrofolate (mTHF) as the methyl donor and reductant in the reaction, yielding dihydrofolate (DHF) as a by-product. This enzymatic reaction provides an intracellular de novo source of dTMP, an essential precursor for DNA biosynthesis. This is Thymidylate synthase from Shewanella putrefaciens (strain CN-32 / ATCC BAA-453).